We begin with the raw amino-acid sequence, 155 residues long: MASASTSDHSKQAGGAHSRQRDSGLLDQLGKFFGQEGSRKVPEKGKEPATRSVLMAPTTHKAHQAAGRQTDDSAVVHFFKNMMSPKKAPVQQKARSGASRAITKFIWGTDGQRPHYGAAGSSKSKEAYRGRRDGSGTLSSFFKMGKKGEGSPARR.

Disordered regions lie at residues 1-70 (MASA…GRQT) and 109-155 (TDGQ…PARR). At Ala2 the chain carries N-acetylalanine. Composition is skewed to basic and acidic residues over residues 37–49 (GSRK…KEPA) and 123–134 (KSKEAYRGRRDG).

It belongs to the myelin basic protein family.

The protein localises to the myelin membrane. In terms of biological role, this protein may function to maintain proper structure of myelin. The protein is Myelin basic protein (MBP) of Heterodontus francisci (Horn shark).